Consider the following 263-residue polypeptide: Type III pantothenate kinase (263 aa).

6-13 (DVGNTNIK) contributes to the ATP binding site. A substrate-binding site is contributed by 108-111 (GSDR). The Proton acceptor role is filled by Asp-110. Asp-131 is a K(+) binding site. Thr-134 contributes to the ATP binding site. Thr-187 serves as a coordination point for substrate.

The protein belongs to the type III pantothenate kinase family. Homodimer. It depends on NH4(+) as a cofactor. K(+) is required as a cofactor.

The protein localises to the cytoplasm. The catalysed reaction is (R)-pantothenate + ATP = (R)-4'-phosphopantothenate + ADP + H(+). Its pathway is cofactor biosynthesis; coenzyme A biosynthesis; CoA from (R)-pantothenate: step 1/5. Catalyzes the phosphorylation of pantothenate (Pan), the first step in CoA biosynthesis. This Anaplasma phagocytophilum (strain HZ) protein is Type III pantothenate kinase.